Reading from the N-terminus, the 117-residue chain is Type II secretion system protein I (117 aa).

A propeptide spans 1 to 6 (MKSKRG) (leader sequence). Residue F7 is modified to N-methylphenylalanine. Residues 7–27 (FTLLEVLVALAIFATAAISVI) traverse the membrane as a helical segment.

It belongs to the GSP I family. In terms of assembly, type II secretion is composed of four main components: the outer membrane complex, the inner membrane complex, the cytoplasmic secretion ATPase and the periplasm-spanning pseudopilus. Interacts with core component EpsG. In terms of processing, cleaved by prepilin peptidase. Post-translationally, methylated by prepilin peptidase at the amino group of the N-terminal phenylalanine once the leader sequence is cleaved by prepilin peptidase.

Its subcellular location is the cell inner membrane. Functionally, component of the type II secretion system required for the energy-dependent secretion of extracellular factors such as proteases and toxins from the periplasm. Part of the pseudopilus tip complex that is critical for the recognition and binding of secretion substrates. This is Type II secretion system protein I (epsI) from Vibrio cholerae serotype O1 (strain ATCC 39315 / El Tor Inaba N16961).